We begin with the raw amino-acid sequence, 159 residues long: Nucleotide-binding protein Pmen_0939 (159 aa).

This sequence belongs to the YajQ family.

Functionally, nucleotide-binding protein. This chain is Nucleotide-binding protein Pmen_0939, found in Ectopseudomonas mendocina (strain ymp) (Pseudomonas mendocina).